The chain runs to 111 residues: Ribonuclease P protein component (111 aa).

This sequence belongs to the RnpA family. In terms of assembly, consists of a catalytic RNA component (M1 or rnpB) and a protein subunit.

It carries out the reaction Endonucleolytic cleavage of RNA, removing 5'-extranucleotides from tRNA precursor.. Its function is as follows. RNaseP catalyzes the removal of the 5'-leader sequence from pre-tRNA to produce the mature 5'-terminus. It can also cleave other RNA substrates such as 4.5S RNA. The protein component plays an auxiliary but essential role in vivo by binding to the 5'-leader sequence and broadening the substrate specificity of the ribozyme. In Fusobacterium nucleatum subsp. nucleatum (strain ATCC 25586 / DSM 15643 / BCRC 10681 / CIP 101130 / JCM 8532 / KCTC 2640 / LMG 13131 / VPI 4355), this protein is Ribonuclease P protein component.